Here is a 406-residue protein sequence, read N- to C-terminus: Tubby-like F-box protein 11 (406 aa).

An F-box domain is found at 53 to 108 (SCWTQLPPELLREVLARVEESEGWWPRRRDVVACAGVCRSWRGIVREIVRTPEASG).

It belongs to the TUB family. In terms of tissue distribution, ubiquitous.

This Oryza sativa subsp. japonica (Rice) protein is Tubby-like F-box protein 11 (TULP11).